The following is a 276-amino-acid chain: Mitochondrial outer membrane protein porin of 36 kDa (276 aa).

The protein belongs to the eukaryotic mitochondrial porin (TC 1.B.8.1) family.

Its subcellular location is the mitochondrion outer membrane. Its function is as follows. Forms a channel through the cell membrane that allows diffusion of small hydrophilic molecules. The channel adopts an open conformation at low or zero membrane potential and a closed conformation at potentials above 30-40 mV. The open state has a weak anion selectivity whereas the closed state is cation-selective. This Solanum tuberosum (Potato) protein is Mitochondrial outer membrane protein porin of 36 kDa.